The sequence spans 153 residues: UPF0756 membrane protein lwe1581 (153 aa).

4 consecutive transmembrane segments (helical) span residues 6-26 (MLFL…SLII), 54-74 (WGVT…QIGF), 80-100 (SFKS…SILA), and 117-137 (LVFG…GPVI).

The protein belongs to the UPF0756 family.

It is found in the cell membrane. The protein is UPF0756 membrane protein lwe1581 of Listeria welshimeri serovar 6b (strain ATCC 35897 / DSM 20650 / CCUG 15529 / CIP 8149 / NCTC 11857 / SLCC 5334 / V8).